The following is a 132-amino-acid chain: MKAKDLLGRHGEDLAVGYLETLGMLIVERNWRCSEGEIDVVALDGDALVIAEVKTRRSLDYGHPFEAVGPDKLARLHRLGAAWCRDRELRMPLRRVDVIAVVDDGGGSPVVEHLKGVAEWRSDAPILWRSWA.

This sequence belongs to the UPF0102 family.

This is UPF0102 protein Achl_2213 from Pseudarthrobacter chlorophenolicus (strain ATCC 700700 / DSM 12829 / CIP 107037 / JCM 12360 / KCTC 9906 / NCIMB 13794 / A6) (Arthrobacter chlorophenolicus).